The primary structure comprises 208 residues: 3-demethoxyubiquinol 3-hydroxylase (208 aa).

Residues E57, E87, H90, E139, E171, and H174 each contribute to the Fe cation site.

This sequence belongs to the COQ7 family. It depends on Fe cation as a cofactor.

It is found in the cell membrane. It catalyses the reaction a 5-methoxy-2-methyl-3-(all-trans-polyprenyl)benzene-1,4-diol + AH2 + O2 = a 3-demethylubiquinol + A + H2O. Its pathway is cofactor biosynthesis; ubiquinone biosynthesis. Functionally, catalyzes the hydroxylation of 2-nonaprenyl-3-methyl-6-methoxy-1,4-benzoquinol during ubiquinone biosynthesis. The polypeptide is 3-demethoxyubiquinol 3-hydroxylase (Burkholderia pseudomallei (strain 668)).